The primary structure comprises 598 residues: MAPRDSAEPLPPLSPQAWAWSGKFLAMGALAGFSVLSLLTYGYLCWGQDLEEEGSLKAQVDERPEAGTAGTSQPHLIFILADDQGFRDVGYHGSEIKTPTLDKLAAEGVKLENYYVQPICTPSRSQFITGKYQIHTGLQHSIIRPTQPNCLPLDNATLPQKLKEVGYSTHMVGKWHLGFYRKDCMPTKRGFDTFFGSLLGSGDYYTHYKCDSPGVCGYDLYENDNAAWDYDNGIYSTQMYTQRVQQILATHDPTKPLFLYVAYQAVHSPLQAPGRYFEHYRSIININRRRYAAMLSCLDEAIHNVTLALKRYGFYNNSIIIYSSDNGGQPTAGGSNWPLRGSKGTYWEGGIRAVGFVHSPLLKNKGTVCKELVHITDWYPTLISLAEGQIDEDIQLDGYDIWETISEGLRSPRVDILHNIDPIYTKAKNGSWAAGYGIWNTAIQSAIRVQHWKLLTGNPGYSDWVPPQAFSNLGPNRWHNERITLSTGKSIWLFNITADPYERVDLSSRYPGIVKKLLRRLSQFNKTAVPVRYPPKDPRSNPRLNGGVWGPWYKEENKKKKSNKTKAKKMQKKKSKARMRKQLAAHSSIKCHPSVATG.

A signal peptide spans 1 to 47 (MAPRDSAEPLPPLSPQAWAWSGKFLAMGALAGFSVLSLLTYGYLCWG). Residues Asp-82, Asp-83, and Cys-120 each coordinate Ca(2+). The active-site Nucleophile is the Cys-120. A 3-oxoalanine (Cys) modification is found at Cys-120. N-linked (GlcNAc...) asparagine glycosylation is present at Asn-155. A substrate-binding site is contributed by Lys-174. His-176 is an active-site residue. His-267 serves as a coordination point for substrate. Residues Asn-304 and Asn-316 are each glycosylated (N-linked (GlcNAc...) asparagine). Residues Asp-325 and Asn-326 each coordinate Ca(2+). Position 343 (Lys-343) interacts with substrate. 4 N-linked (GlcNAc...) asparagine glycosylation sites follow: Asn-429, Asn-495, Asn-525, and Asn-563. The tract at residues 532–598 (RYPPKDPRSN…IKCHPSVATG (67 aa)) is disordered. A compositionally biased stretch (basic residues) spans 559-583 (KKKSNKTKAKKMQKKKSKARMRKQL).

The protein belongs to the sulfatase family. It depends on Ca(2+) as a cofactor. In terms of processing, the conversion to 3-oxoalanine (also known as C-formylglycine, FGly), of a serine or cysteine residue in prokaryotes and of a cysteine residue in eukaryotes, is critical for catalytic activity.

The protein localises to the secreted. The sequence is that of Arylsulfatase J (Arsj) from Mus musculus (Mouse).